A 218-amino-acid chain; its full sequence is UPF0711 protein C18orf21 homolog (218 aa).

Ser-126 carries the phosphoserine modification. The span at 130–146 (ASAASKASPKTPKRAAA) shows a compositional bias: low complexity. Positions 130–192 (ASAASKASPK…NGSKRKKHFS (63 aa)) are disordered. Position 140 is a phosphothreonine (Thr-140). Residues 147-156 (GSTNISQSVH) show a composition bias toward polar residues. A compositionally biased stretch (low complexity) spans 161 to 172 (RSPSSTVRTPTS). Polar residues predominate over residues 173 to 183 (GQSTPICSSRN).

The protein belongs to the UPF0711 family.

The sequence is that of UPF0711 protein C18orf21 homolog from Rattus norvegicus (Rat).